Consider the following 776-residue polypeptide: Ecdysone receptor (776 aa).

The interval 1 to 290 (MYRLNIVSTN…GPTPRQQEEL (290 aa)) is modulating. Positions 199-283 (NEEWISSPSP…DAKKQKKGPT (85 aa)) are disordered. The segment covering 204–213 (SSPSPGSVPG) has biased composition (low complexity). Polar residues-rich tracts occupy residues 227 to 245 (TTYT…STGS) and 261 to 270 (SPSSSLNGYT). The segment at residues 288–363 (EELCLVCGDR…VGMRPECVVP (76 aa)) is a DNA-binding region (nuclear receptor). 2 consecutive NR C4-type zinc fingers follow at residues 291 to 311 (CLVC…CEGC) and 327 to 346 (CKFG…CQEC). The 237-residue stretch at 437 to 673 (NQMAVIYKLI…FLEEIWDVQD (237 aa)) folds into the NR LBD domain. A compositionally biased stretch (polar residues) spans 679–688 (QAQMHSHGTQ). Positions 679-776 (QAQMHSHGTQ…VPGLGMLDQV (98 aa)) are disordered. Low complexity predominate over residues 689-745 (SSSSSSSSSSSSSNGSSNGNSSSNSNSSQHGPHPHPHGQQLTPNQQQHQQQHSQLQQ).

Belongs to the nuclear hormone receptor family. NR1 subfamily. As to quaternary structure, heterodimer of USP and ECR. Only the heterodimer is capable of high-affinity binding to ecdysone. As to expression, a peak level expression is seen in the fat body of previtellogenic female mosquitos at one and two days after eclosion, levels fall three-fold at three days posteclosion.

The protein resides in the nucleus. Its function is as follows. Receptor for ecdysone. Binds to ecdysone response elements (ECRES). In Aedes aegypti (Yellowfever mosquito), this protein is Ecdysone receptor (EcR).